The following is a 76-amino-acid chain: Theta defensin subunit B (76 aa).

The N-terminal stretch at 1 to 22 is a signal peptide; it reads MRTFALLTAMLLLVALQPQAEA. Positions 23-64 are excised as a propeptide; the sequence is RQARADEAAAQQQPGADDQGMAHSFTRPENAALPLSESAKGL. Positions 24–54 are disordered; sequence QARADEAAAQQQPGADDQGMAHSFTRPENAA. The span at 30–44 shows a compositional bias: low complexity; that stretch reads AAAQQQPGADDQGMA. Arginine 65 is covalently cross-linked (Cyclopeptide (Arg-Cys) (interchain with C-73 in subunit A); in form BTD-1). Arginine 65 is covalently cross-linked (Cyclopeptide (Arg-Cys) (interchain with C-73 in subunit B); in form BTD-2). A disulfide bridge links cysteine 68 with cysteine 73. Cysteine 73 is covalently cross-linked (Cyclopeptide (Cys-Arg) (interchain with R-65 in subunit A); in form BTD-1). A Cyclopeptide (Cys-Arg) (interchain with R-65 in subunit B); in form BTD-2 cross-link involves residue cysteine 73. Residues 74 to 76 constitute a propeptide that is removed on maturation; that stretch reads QLL.

The protein belongs to the alpha-defensin family. Theta subfamily. As to quaternary structure, BTD-1 is a cyclic heterodimer composed of subunits A and B; disulfide-linked. BTD-2 is a cyclic homodimer composed of two subunits B; disulfide-linked. Forms a cyclic peptide with subunit A (BTD-1), or subunit B (BTD-2). An additional intersubunit disulfide bond is formed.

Functionally, BTD-1 and BTD-2 have antimicrobial activity against the Gram-negative bacterium E.coli ML35, the Gram-positive bacterium S.aureus 502a, and the fungus C.albicans 16820. BTD-2 is more effective against E.coli than BTD-1. This Papio anubis (Olive baboon) protein is Theta defensin subunit B (BTDB).